The sequence spans 222 residues: V-type ATP synthase subunit D (222 aa).

It belongs to the V-ATPase D subunit family.

In terms of biological role, produces ATP from ADP in the presence of a proton gradient across the membrane. The polypeptide is V-type ATP synthase subunit D (Clostridioides difficile (strain 630) (Peptoclostridium difficile)).